The following is a 74-amino-acid chain: uncharacterized protein (74 aa).

This is an uncharacterized protein from Staphylococcus aureus.